Consider the following 416-residue polypeptide: NADH-quinone oxidoreductase subunit D (416 aa).

Belongs to the complex I 49 kDa subunit family. As to quaternary structure, NDH-1 is composed of 14 different subunits. Subunits NuoB, C, D, E, F, and G constitute the peripheral sector of the complex.

The protein localises to the cell inner membrane. The catalysed reaction is a quinone + NADH + 5 H(+)(in) = a quinol + NAD(+) + 4 H(+)(out). Its function is as follows. NDH-1 shuttles electrons from NADH, via FMN and iron-sulfur (Fe-S) centers, to quinones in the respiratory chain. The immediate electron acceptor for the enzyme in this species is believed to be ubiquinone. Couples the redox reaction to proton translocation (for every two electrons transferred, four hydrogen ions are translocated across the cytoplasmic membrane), and thus conserves the redox energy in a proton gradient. This is NADH-quinone oxidoreductase subunit D from Caulobacter sp. (strain K31).